A 551-amino-acid polypeptide reads, in one-letter code: DEAD-box ATP-dependent RNA helicase 47, mitochondrial (551 aa).

Residues M1–T29 constitute a mitochondrion transit peptide. A Q motif motif is present at residues K110–S138. In terms of domain architecture, Helicase ATP-binding spans V141–V340. Residue S154–T161 coordinates ATP. Positions D274–D277 match the DEAD box motif. Positions T397–A548 constitute a Helicase C-terminal domain.

The protein belongs to the DEAD box helicase family. Mostly expressed in leaves and flowers, and, to a lower extent, in roots, seedlings and siliques, especially in meristematic regions.

The protein resides in the mitochondrion. The catalysed reaction is ATP + H2O = ADP + phosphate + H(+). Its function is as follows. Essential protein required during embryogenesis. Required for mitochondrial metabolism. Necessary for normal plasmodesmata (PD) development and aperture regulation. This chain is DEAD-box ATP-dependent RNA helicase 47, mitochondrial (RH47), found in Arabidopsis thaliana (Mouse-ear cress).